The following is a 299-amino-acid chain: Homoserine kinase (299 aa).

Position 85–95 (85–95 (PMSRGLGSSAT)) interacts with ATP.

Belongs to the GHMP kinase family. Homoserine kinase subfamily.

It localises to the cytoplasm. The enzyme catalyses L-homoserine + ATP = O-phospho-L-homoserine + ADP + H(+). Its pathway is amino-acid biosynthesis; L-threonine biosynthesis; L-threonine from L-aspartate: step 4/5. Functionally, catalyzes the ATP-dependent phosphorylation of L-homoserine to L-homoserine phosphate. In Clostridium novyi (strain NT), this protein is Homoserine kinase.